A 490-amino-acid chain; its full sequence is Hexokinase (490 aa).

The region spanning 21–466 (QNLLEHIKHF…SGVGAALIAA (446 aa)) is the Hexokinase domain. The hexokinase small subdomain stretch occupies residues 75–209 (DGKETGTFLA…GLPIKVAALI (135 aa)). The tract at residues 210-455 (NDTTGTLIAS…DKVTIHAAED (246 aa)) is hexokinase large subdomain.

The protein belongs to the hexokinase family. Monomer.

The enzyme catalyses a D-hexose + ATP = a D-hexose 6-phosphate + ADP + H(+). It carries out the reaction D-fructose + ATP = D-fructose 6-phosphate + ADP + H(+). It catalyses the reaction D-glucose + ATP = D-glucose 6-phosphate + ADP + H(+). It participates in carbohydrate metabolism; hexose metabolism. The protein operates within carbohydrate degradation; glycolysis; D-glyceraldehyde 3-phosphate and glycerone phosphate from D-glucose: step 1/4. In terms of biological role, catalyzes the phosphorylation of hexose, such as D-glucose and D-fructose, to hexose 6-phosphate (D-glucose 6-phosphate and D-fructose 6-phosphate, respectively). Mediates the initial step of glycolysis by catalyzing phosphorylation of D-glucose to D-glucose 6-phosphate. The chain is Hexokinase (hxkA) from Emericella nidulans (strain FGSC A4 / ATCC 38163 / CBS 112.46 / NRRL 194 / M139) (Aspergillus nidulans).